The sequence spans 382 residues: S-adenosylmethionine synthase (382 aa).

His-15 contacts ATP. Asp-17 contacts Mg(2+). Glu-43 contributes to the K(+) binding site. Glu-56 and Gln-99 together coordinate L-methionine. The interval 99-109 (QSPDINQGVDR) is flexible loop. Residues 164–166 (DAK), 230–231 (RF), Asp-239, 245–246 (RK), Ala-262, and Lys-266 each bind ATP. Asp-239 lines the L-methionine pocket. Position 270 (Lys-270) interacts with L-methionine.

This sequence belongs to the AdoMet synthase family. In terms of assembly, homotetramer; dimer of dimers. The cofactor is Mg(2+). K(+) serves as cofactor.

Its subcellular location is the cytoplasm. The catalysed reaction is L-methionine + ATP + H2O = S-adenosyl-L-methionine + phosphate + diphosphate. It functions in the pathway amino-acid biosynthesis; S-adenosyl-L-methionine biosynthesis; S-adenosyl-L-methionine from L-methionine: step 1/1. In terms of biological role, catalyzes the formation of S-adenosylmethionine (AdoMet) from methionine and ATP. The overall synthetic reaction is composed of two sequential steps, AdoMet formation and the subsequent tripolyphosphate hydrolysis which occurs prior to release of AdoMet from the enzyme. The polypeptide is S-adenosylmethionine synthase (Psychromonas ingrahamii (strain DSM 17664 / CCUG 51855 / 37)).